A 347-amino-acid polypeptide reads, in one-letter code: D-alanine--D-alanine ligase (347 aa).

Residues 134-332 (KLYAKDLGIK…LAQSLPKTPK (199 aa)) form the ATP-grasp domain. ATP is bound at residue 161 to 216 (LINFNFPFIIKPNSAGSSLGVSVVKEEKELNYALDSAFEYSKEVLIEPFIQGVKEY). Asp288, Glu300, and Asn302 together coordinate Mg(2+).

This sequence belongs to the D-alanine--D-alanine ligase family. The cofactor is Mg(2+). It depends on Mn(2+) as a cofactor.

Its subcellular location is the cytoplasm. It catalyses the reaction 2 D-alanine + ATP = D-alanyl-D-alanine + ADP + phosphate + H(+). Its pathway is cell wall biogenesis; peptidoglycan biosynthesis. Cell wall formation. The polypeptide is D-alanine--D-alanine ligase (Helicobacter pylori (strain HPAG1)).